An 876-amino-acid chain; its full sequence is MATERYNPRDAEPRWQQQWEAGKIFETKNDDPREKYYVLEMFPYPSGRIHMGHVRNYTMGDVVARYKRARGFNVLHPMGWDAFGMPAENAAMERGVHPASWTYQNIASMKAQLKVMGLSLDWSREFATCDPEYYQRQQHLFLDFLEKGLVYRKQSKVNWDPVDNTVLANEQVIDGRGWRSGALVEQRELTQWFFRITDFSQDLLDSLDTLDEWPEKVRLMQKNWIGRSEGLSVRWELDPATVPGEEKELTVYTTRPDTLFGASFLAISADHPLARDAAAKSAEIEAFCEECRRAGTSLAALETAEKMGIDTGIRARHPFDPDWELPVYVANFVLMDYGTGAIFGCPSGDQRDLDFARKYGLPVVPVVMPKDADPQTFTIGDEAYVGDGVMINSRFLDGLSTEEAFETIATRLEKDLLNGTPRAERKVNFRLRDWGISRQRYWGCPIPVIHCDDCGVVPVPKTDLPVTLPPDVTFDKPGNPLDRHPTWRHVACPQCGKDARRETDTMDTFVDSSWYFTRFTAPWEDGPTDPKAANHWLPVDQYIGGIEHAILHLLYSRFFTRAMKATGHVALDEPFKGLFTQGMVVHETYSRGEGAQREWITPAEIRIEEADGQRRAVHIETSEEIAIGSIEKMSKSKKNVVDPDDIIASYGADTARFFVLSDSPPDRDVIWSEAGVEGAHRFVQRVWRLLSEAAEGLSAAEAAPAREGEGLAVSQAAHRTLKAVEADYDKLAFNKAVARIYELVNTLAAPLAQIAAGKADQALTAAVKDAAGILISLIAPMMPHLAEECWRAIGGKGLIAERPWPKFDATLVVENEITLPVQINGKKRADLTIARDADQSAIESAVLALDVVKTALNGSNPKKIIVVPQRIVNVVV.

Residues 43–53 (PYPSGRIHMGH) carry the 'HIGH' region motif. Residues 632 to 636 (KMSKS) carry the 'KMSKS' region motif. Lys-635 is an ATP binding site.

It belongs to the class-I aminoacyl-tRNA synthetase family.

The protein resides in the cytoplasm. The enzyme catalyses tRNA(Leu) + L-leucine + ATP = L-leucyl-tRNA(Leu) + AMP + diphosphate. This is Leucine--tRNA ligase from Sinorhizobium medicae (strain WSM419) (Ensifer medicae).